A 376-amino-acid polypeptide reads, in one-letter code: Glutamate 5-kinase (376 aa).

ATP is bound at residue K15. Substrate contacts are provided by S56, D143, and N155. Residue 175–176 participates in ATP binding; it reads SD. Residues 281–358 enclose the PUA domain; sequence KGTLTIDAGA…PDVMMILGIT (78 aa).

This sequence belongs to the glutamate 5-kinase family.

The protein localises to the cytoplasm. The enzyme catalyses L-glutamate + ATP = L-glutamyl 5-phosphate + ADP. It participates in amino-acid biosynthesis; L-proline biosynthesis; L-glutamate 5-semialdehyde from L-glutamate: step 1/2. Its function is as follows. Catalyzes the transfer of a phosphate group to glutamate to form L-glutamate 5-phosphate. The polypeptide is Glutamate 5-kinase (Rhodopseudomonas palustris (strain ATCC BAA-98 / CGA009)).